The chain runs to 441 residues: Serine--tRNA ligase (441 aa).

250–252 (TSE) provides a ligand contact to L-serine. ATP is bound by residues 281–283 (RRE) and Val-297. Glu-304 is an L-serine binding site. 368–371 (EIVS) is an ATP binding site. Thr-402 contributes to the L-serine binding site.

This sequence belongs to the class-II aminoacyl-tRNA synthetase family. Type-1 seryl-tRNA synthetase subfamily. Homodimer. The tRNA molecule binds across the dimer.

The protein localises to the cytoplasm. It carries out the reaction tRNA(Ser) + L-serine + ATP = L-seryl-tRNA(Ser) + AMP + diphosphate + H(+). The enzyme catalyses tRNA(Sec) + L-serine + ATP = L-seryl-tRNA(Sec) + AMP + diphosphate + H(+). The protein operates within aminoacyl-tRNA biosynthesis; selenocysteinyl-tRNA(Sec) biosynthesis; L-seryl-tRNA(Sec) from L-serine and tRNA(Sec): step 1/1. In terms of biological role, catalyzes the attachment of serine to tRNA(Ser). Is also able to aminoacylate tRNA(Sec) with serine, to form the misacylated tRNA L-seryl-tRNA(Sec), which will be further converted into selenocysteinyl-tRNA(Sec). This is Serine--tRNA ligase from Thermoplasma acidophilum (strain ATCC 25905 / DSM 1728 / JCM 9062 / NBRC 15155 / AMRC-C165).